The primary structure comprises 460 residues: UDP-N-acetylmuramate--L-alanine ligase (460 aa).

Position 119 to 125 (119 to 125) interacts with ATP; the sequence is GSHGKTT.

Belongs to the MurCDEF family.

It localises to the cytoplasm. The catalysed reaction is UDP-N-acetyl-alpha-D-muramate + L-alanine + ATP = UDP-N-acetyl-alpha-D-muramoyl-L-alanine + ADP + phosphate + H(+). Its pathway is cell wall biogenesis; peptidoglycan biosynthesis. In terms of biological role, cell wall formation. This Alkaliphilus metalliredigens (strain QYMF) protein is UDP-N-acetylmuramate--L-alanine ligase.